The sequence spans 235 residues: Thymidylate kinase (235 aa).

Residue 10-17 coordinates ATP; sequence GINGVEKS.

Belongs to the thymidylate kinase family.

It catalyses the reaction dTMP + ATP = dTDP + ADP. The protein operates within pyrimidine metabolism; dTTP biosynthesis. Catalyzes the conversion of dTMP to dTDP. The polypeptide is Thymidylate kinase (TMK) (African swine fever virus (isolate Pig/Kenya/KEN-50/1950) (ASFV)).